A 432-amino-acid chain; its full sequence is MKAILIPFLSLLIPLTPQSAFAQSEPELKLESVVIVSRHGVRAPTKATQLMQDVTPDAWPTWPVKLGWLTPRGGELIAYLGHYQRQRLVADGLLAKKGCPQSGQVAIIADVDERTRKTGEAFAAGLAPDCAITVHTQADTSSPDPLFNPLKTGVCQLDNANVTDAILSRAGGSIADFTGHRQTAFRELERVLNFPQSNLCLKREKQDESCSLTQALPSELKVSADNVSLTGAVSLASMLTEIFLLQQAQGMPEPGWGRITDSHQWNTLLSLHNAQFYLLQRTPEVARSRATPLLDLIKTALTPHPPQKQAYGVTLPTSVLFIAGHDTNLANLGGALELNWTLPGQPDNTPPGGELVFERWRRLSDNSQWIQVSLVFQTLQQMRDKTPLSLNTPPGEVKLTLAGCEERNAQGMCSLAGFTQIVNEARIPACSL.

Positions 1–22 are cleaved as a signal peptide; the sequence is MKAILIPFLSLLIPLTPQSAFA. Position 38 (Arg38) interacts with 1D-myo-inositol hexakisphosphate. The Nucleophile role is filled by His39. Residues 42–46 and Arg114 contribute to the 1D-myo-inositol hexakisphosphate site; that span reads RAPTK. Disulfide bonds link Cys99–Cys130, Cys155–Cys430, Cys200–Cys210, and Cys404–Cys413. 1D-myo-inositol hexakisphosphate contacts are provided by residues Arg289 and 325-327; that span reads HDT. The Proton donor role is filled by Asp326.

The protein belongs to the histidine acid phosphatase family. In terms of assembly, monomer.

It is found in the periplasm. The enzyme catalyses 1D-myo-inositol hexakisphosphate + H2O = 1D-myo-inositol 1,2,3,4,5-pentakisphosphate + phosphate. It carries out the reaction 1D-myo-inositol 1,2,3,4,5-pentakisphosphate + H2O = 1D-myo-inositol 2,3,4,5-tetrakisphosphate + phosphate. The catalysed reaction is 1D-myo-inositol 2,3,4,5-tetrakisphosphate + H2O = 1D-myo-inositol 2,4,5-triphosphate + phosphate. It catalyses the reaction 1D-myo-inositol 2,4,5-triphosphate + H2O = 1D-myo-inositol 2,5-bisphosphate + phosphate. The enzyme catalyses 1D-myo-inositol 2,5-bisphosphate + H2O = 1D-myo-inositol 2-phosphate + phosphate. It carries out the reaction GTP + H2O = GDP + phosphate + H(+). Contains three consecutive and one non-consecutive disulfide bonds and shows a strong dependence on DsbC for its full activity. Competitively inhibited by tartaric acid and by sodium fluorid. In terms of biological role, catalyzes the hydrolysis of phytate (or myo-inositol hexakisphosphate, an indigestible organic form of phosphorus that is found in many plant tissues) to myo-inositol and inorganic phosphate. Dephosphorylates phytate in a stereospecific way by sequential removal of phosphate groups to produce myo-inositol 2-monophosphate. Also shows phosphoanhydride phosphatase activity and hydrolyzes the distal phosphoryl residues of GTP, the 5'-beta-phosphoryl residue of the regulatory nucleotide ppGpp and tripolyphosphates. Does not split most phosphomonoesters with the exception of the synthetic substrate p-nitrophenyl phosphate (pNPP), 2,3-bisphosphoglycerate and fructose 1,6-bisphosphate. This is Phytase AppA from Escherichia coli (strain K12).